A 320-amino-acid chain; its full sequence is Mechanosensory protein 3 (320 aa).

LIM zinc-binding domains follow at residues 29-79 and 89-145; these read CNCC…CSQH and CAGC…CMTH. The homeobox DNA-binding region spans 216–275; it reads RRGPRTTIKQNQLDVLNEMFSNTPKPSKHARAKKALETGLSMRVIQVWFQNRRSKERRLK.

The protein localises to the nucleus. Specifies differentiation of the set of six touch receptor neurons. Binds cooperatively as a heterodimer with unc-86 to sites in the mec-3 gene promoter. The chain is Mechanosensory protein 3 (mec-3) from Caenorhabditis remanei (Caenorhabditis vulgaris).